Reading from the N-terminus, the 256-residue chain is MRPGALWPLLWGALVWAVGSVGAVMGSGDSVPGGVCWLQQGKEATCSLVLKTQVSREECCASGNINTAWSNFTHPGNKISLLGFLGLVHCLPCKDSCDGVECGPGKACRMLGGRPHCECVSNCEGVPAGFQVCGSDGATYRDECELRTARCRGHPDLRVMYRGRCQKSCAQVVCPRPQSCLVDQTGSAHCVVCRAAPCPVPPNPGQELCGNNNVTYISSCHLRQATCFLGRSIGVRHPGICTGGPKVPAEEEENFV.

The N-terminal stretch at 1 to 23 is a signal peptide; it reads MRPGALWPLLWGALVWAVGSVGA. The 72-residue stretch at 34–105 folds into the TB domain; it reads GVCWLQQGKE…SCDGVECGPG (72 aa). Disulfide bonds link C36-C59, C46-C90, C60-C93, C97-C108, C102-C117, C119-C151, C123-C144, and C133-C165. N71 is a glycosylation site (N-linked (GlcNAc...) asparagine). In terms of domain architecture, Follistatin-like 1 spans 97–117; that stretch reads CDGVECGPGKACRMLGGRPHC. Kazal-like domains are found at residues 111–167 and 187–243; these read LGGR…RCQK and SAHC…ICTG. The region spanning 168–191 is the Follistatin-like 2 domain; it reads SCAQVVCPRPQSCLVDQTGSAHCV. 3 disulfide bridges follow: C193–C227, C198–C220, and C209–C241. The N-linked (GlcNAc...) asparagine glycan is linked to N213.

In terms of assembly, interacts with INHBA and INHBB. Interacts with FN1. Interacts with ADAM12. Interacts with MLLT10; the interaction enhances MLLT10 in vitro transcriptional activity and self-association. Interacts with MSTN.

It is found in the secreted. The protein resides in the nucleus. The secreted form is a binding and antagonizing protein for members of the TGF-beta family, such as activin, BMP2 and MSTN. Inhibits activin A-, activin B-, BMP2- and MSDT-induced cellular signaling; more effective on activin A than on activin B. Involved in bone formation; inhibits osteoclast differentiation. Involved in hematopoiesis; involved in differentiation of hemopoietic progenitor cells, increases hematopoietic cell adhesion to fibronectin and seems to contribute to the adhesion of hematopoietic precursor cells to the bone marrow stroma. The nuclear form is probably involved in transcriptional regulation via interaction with MLLT10. The polypeptide is Follistatin-related protein 3 (Fstl3) (Rattus norvegicus (Rat)).